Reading from the N-terminus, the 166-residue chain is 2S seed storage protein 4 (166 aa).

Positions 1 to 21 (MANKLFLVCAALALCFILTNA) are cleaved as a signal peptide. Propeptides lie at residues 22-37 (SVYR…DASN) and 73-88 (GPSL…DIEN).

It belongs to the 2S seed storage albumins family. The mature protein consists of a small and a large chain linked by disulfide bonds.

This is a 2S seed storage protein. This is 2S seed storage protein 4 (AT2S4) from Arabidopsis thaliana (Mouse-ear cress).